Reading from the N-terminus, the 176-residue chain is MSMEAPRRGRRWVSLGMIALLAAIGLGLYWDQLSTPSGITPATSPRRAEGLLLGRLPLPMEPSLLSPLERLLEPPLRYKLMTIRHIPPVKPGTGMPHPYVGDCIQCHLMVGGPAAGSQFKTPYGAVLENLSRVRKLGPPILPTSRQPHPPAGRCIKCHDIVVKVPVDKKGGMRWQL.

At Met-1–Arg-11 the chain is on the cytoplasmic side. Residues Trp-12–Trp-30 traverse the membrane as a helical segment. Over Asp-31–Leu-176 the chain is Lumenal. An MCR (magnetochrome) 1 motif is present at residues Val-89–Met-109. Positions 103, 106, 107, 154, 157, and 158 each coordinate heme. Residues Ile-140–Ile-160 carry the MCR 2 motif.

It belongs to the magnetosome MamT family. Heme serves as cofactor.

The protein resides in the magnetosome membrane. In terms of biological role, may play a role in magnetite crystal maturation. May transfer electrons to balance the Fe(2+)-Fe(3+) ratio during magnetite formation. In Paramagnetospirillum magneticum (strain ATCC 700264 / AMB-1) (Magnetospirillum magneticum), this protein is Magnetosome protein MamT (mamT).